The chain runs to 1396 residues: MAITKIILQQMVTMDQNSITASKYPKYTVVLSNSISSITAADVTSAIESSKASGPAAKQSEINAKQSELNAKDSENEAEISATSSQQSATQSASSATASANSAKAAKTSETNANNSKNAAKTSETNAASSASSASSFATAAENSARAAKTSETNAGNSAQAADASKTAAANSATAAKTSETNAKKSETAAKTSETNAKTSENKAKEYLDMASELVSPVTQYDWPVGTNNNSVYVKIAKLTDPGAVSCHLTLMITNGGNYGSSYGNIDFVEISARGLNDARGVTSENITKFLSVRRLGSPNLAWDNQLRYGLVEGDGYFEVWCYQRAFIKETRVAVLAQTGRTELYIPEGFVSQDTQPSGFIESLAARIYDQVNKPTKADLGLENAMLVGAFGLGGNGLSYSSVQSNVDLINKLKANGGQYWRAARESGANVDINDHGSGFYSHCGDTHAAINVQYNTGIVKVLATTDRNLASDIVYANTLYGTANKPSKSDVGLGNVTNDAQVKKAGDVMSGDLDIRKETPSIRLKSTQGNAHLWFMNNDGGERGVIWSPPNNGSLGEIHIRAKTSDGTSTGDFIVRHDGRIEAKDAKISYKISSRTAEFSNDDTNTAATNLRVSGKQHTPIMLVRDSDSNVSVGFKLNNMNAKLLGIDIDGDLAFGENPDHKQNSKIVTRKMMDAGFSVAGLMDFTNGFAGPWEAKNISDQELDLNSLMIKKSDPGSIRVYQCVSAGGGNNITNKPSGIGGNFILYVESIRKVGDTDFTNRQRLFGTDLNREFTRYCSNGTWSAWRESVVSGMNQDVSVKSMSVSGRLSGNELSVGGAGVLNGNLGVGGGATSKMPSSDKGIVIGRGSIVREGGEGRLILSSSGGTDRLLQLRPAGATSLDNQVEISCTSASAGDTKISFGQGAAIRCNNAGSPIISAKAGQMIYFRPNGDGISEGQMILSPNGDLVVKGGVNSKEIDVTASQSLPLKETTATTGIGVNFIGDSATECSFGIENTAGGSAVFHNYTRGASNSVTKNNQLLGGYGSRPWLGSTYTEHSNAALHFLGAGDTSATNHGGWIRLLVTPKGKTISDRVPAFRLSDNGDLWLVPDGAMHSDLGLVRSIETLNAAVPRFNAPSIQDGRGLKIVAPQAPEIDLIAPRGSGASAPAIRAMWCDGSLADTTRYIGATQPGSTFYIGASGHDGEKFDSMRGSVAIKSAGGWGPTSTPTQVVLETCESGSISRLPRWGVDHNGTLMPMADNRYNLGWGSGRVKQVYAVNGTINTSDARLKNDVRAMSDPETEAAKAIAKEIGFWTWKEQADMNDIREHCGLTVQRAIEIMESFGLDPFKYGFICYDKWDEHTVVSEYGPANEDGTENPIYKTIPAGDHYSFRLEELNLFIAKGFEARLSAIEDKLGM.

Disordered stretches follow at residues 51–133 and 145–203; these read KASG…SASS and ARAA…SENK. Residues 60–69 show a composition bias toward polar residues; sequence SEINAKQSEL. Low complexity-rich tracts occupy residues 81–133 and 157–181; these read SATS…SASS and NSAQ…TSET. Coiled-coil stretches lie at residues 187–214 and 1263–1396; these read ETAA…ASEL and TSDA…KLGM. The segment covering 189–199 has biased composition (polar residues); that stretch reads AAKTSETNAKT. In terms of domain architecture, Peptidase S74 spans 1265-1394; that stretch reads DARLKNDVRA…ARLSAIEDKL (130 aa).

In terms of assembly, homotrimer. Interacts with the O-antigens of host lipopolysaccharides. In terms of processing, the cleaved C-terminus functions as an intramolecular chaperone and is removed by an autoproteolytic process after correct trimerization and folding.

It is found in the virion. In terms of biological role, assembles together with p132 to form the three L-shaped long tail fibers and the collar structure at the junction between the tail tube and the conical tail tip. The three L-shaped long tail fibers recognize the host lipopolysaccharides that serve as adhesion receptor for virus entry. Each fiber consists of a thin proximal rod of about 30 nm connected by a hinge to a thicker distal part of about 47 nm. The protein is Side tail fiber protein pb1 of Escherichia coli (Enterobacteria phage T5).